Here is a 548-residue protein sequence, read N- to C-terminus: tRNA (guanine(26)-N(2))-dimethyltransferase (548 aa).

The Trm1 methyltransferase domain occupies 30-470; that stretch reads ASLTEGSAII…APWSFVWDVL (441 aa). Positions 57, 137, 155, and 186 each coordinate S-adenosyl-L-methionine. Zn(2+) contacts are provided by C317, C320, C354, and C357. A disordered region spans residues 523 to 548; the sequence is QMNPTENWGPKSKPGKRTIAEVDSKS.

The protein belongs to the class I-like SAM-binding methyltransferase superfamily. Trm1 family.

The protein localises to the mitochondrion. The protein resides in the nucleus. It is found in the cytoplasm. The catalysed reaction is guanosine(26) in tRNA + 2 S-adenosyl-L-methionine = N(2)-dimethylguanosine(26) in tRNA + 2 S-adenosyl-L-homocysteine + 2 H(+). Functionally, dimethylates a single guanine residue at position 26 of nuclear- and mitochondrial-encoded tRNAs using S-adenosyl-L-methionine as donor of the methyl groups. Also has tRNA strand annealing and dissociation activity independently of its tRNA guanine-dimethyltransferase activity. The polypeptide is tRNA (guanine(26)-N(2))-dimethyltransferase (Schizosaccharomyces pombe (strain 972 / ATCC 24843) (Fission yeast)).